The primary structure comprises 180 residues: Adenine phosphoribosyltransferase (180 aa).

The residue at position 2 (Ser2) is an N-acetylserine. Residues Ser15 and Ser30 each carry the phosphoserine modification. Tyr60 carries the post-translational modification Phosphotyrosine. Ser66 is modified (phosphoserine). N6-acetyllysine is present on Lys114. Residue Thr135 is modified to Phosphothreonine.

This sequence belongs to the purine/pyrimidine phosphoribosyltransferase family. Homodimer.

The protein localises to the cytoplasm. It catalyses the reaction AMP + diphosphate = 5-phospho-alpha-D-ribose 1-diphosphate + adenine. It functions in the pathway purine metabolism; AMP biosynthesis via salvage pathway; AMP from adenine: step 1/1. Catalyzes a salvage reaction resulting in the formation of AMP, that is energically less costly than de novo synthesis. This is Adenine phosphoribosyltransferase from Mus musculus (Mouse).